Consider the following 329-residue polypeptide: Ribonucleoside-diphosphate reductase small chain (329 aa).

Aspartate 75, glutamate 106, and histidine 109 together coordinate Fe cation. Residue tyrosine 113 is part of the active site. Glutamate 168, glutamate 202, and histidine 205 together coordinate Fe cation.

Belongs to the ribonucleoside diphosphate reductase small chain family. As to quaternary structure, heterodimer of a large and a small chain. It depends on Fe cation as a cofactor.

The protein resides in the cytoplasm. It carries out the reaction a 2'-deoxyribonucleoside 5'-diphosphate + [thioredoxin]-disulfide + H2O = a ribonucleoside 5'-diphosphate + [thioredoxin]-dithiol. In terms of biological role, provides the precursors necessary for DNA synthesis. Catalyzes the biosynthesis of deoxyribonucleotides from the corresponding ribonucleotides. The sequence is that of Ribonucleoside-diphosphate reductase small chain from Nicotiana tabacum (Common tobacco).